The primary structure comprises 337 residues: Ketol-acid reductoisomerase (NADP(+)) (337 aa).

Residues 3-183 (VEVFYDDDAD…GGTRAGAIRT (181 aa)) enclose the KARI N-terminal Rossmann domain. Residues 26–29 (YGSQ), serine 52, serine 54, and 84–87 (DTAQ) contribute to the NADP(+) site. Histidine 109 is a catalytic residue. Glycine 135 is an NADP(+) binding site. In terms of domain architecture, KARI C-terminal knotted spans 184–329 (TFTEETETDL…SKLRGMMSWV (146 aa)). Mg(2+) contacts are provided by aspartate 192, glutamate 196, glutamate 228, and glutamate 232. Serine 253 contributes to the substrate binding site.

This sequence belongs to the ketol-acid reductoisomerase family. Mg(2+) is required as a cofactor.

The catalysed reaction is (2R)-2,3-dihydroxy-3-methylbutanoate + NADP(+) = (2S)-2-acetolactate + NADPH + H(+). It catalyses the reaction (2R,3R)-2,3-dihydroxy-3-methylpentanoate + NADP(+) = (S)-2-ethyl-2-hydroxy-3-oxobutanoate + NADPH + H(+). Its pathway is amino-acid biosynthesis; L-isoleucine biosynthesis; L-isoleucine from 2-oxobutanoate: step 2/4. It functions in the pathway amino-acid biosynthesis; L-valine biosynthesis; L-valine from pyruvate: step 2/4. Involved in the biosynthesis of branched-chain amino acids (BCAA). Catalyzes an alkyl-migration followed by a ketol-acid reduction of (S)-2-acetolactate (S2AL) to yield (R)-2,3-dihydroxy-isovalerate. In the isomerase reaction, S2AL is rearranged via a Mg-dependent methyl migration to produce 3-hydroxy-3-methyl-2-ketobutyrate (HMKB). In the reductase reaction, this 2-ketoacid undergoes a metal-dependent reduction by NADPH to yield (R)-2,3-dihydroxy-isovalerate. This chain is Ketol-acid reductoisomerase (NADP(+)), found in Salinispora arenicola (strain CNS-205).